A 215-amino-acid chain; its full sequence is Orotidine 5'-phosphate decarboxylase (215 aa).

Substrate-binding positions include Asp12, Lys34, 60-69 (DFKVADIPNT), Ser117, 170-180 (PGVGAQGGSAA), Gly193, and Arg194. The Proton donor role is filled by Lys62.

Belongs to the OMP decarboxylase family. Type 1 subfamily. Homodimer.

The enzyme catalyses orotidine 5'-phosphate + H(+) = UMP + CO2. Its pathway is pyrimidine metabolism; UMP biosynthesis via de novo pathway; UMP from orotate: step 2/2. Functionally, catalyzes the decarboxylation of orotidine 5'-monophosphate (OMP) to uridine 5'-monophosphate (UMP). In Methanococcoides burtonii (strain DSM 6242 / NBRC 107633 / OCM 468 / ACE-M), this protein is Orotidine 5'-phosphate decarboxylase.